A 327-amino-acid chain; its full sequence is Phenylalanine--tRNA ligase alpha subunit (327 aa).

Glu-252 contacts Mg(2+).

The protein belongs to the class-II aminoacyl-tRNA synthetase family. Phe-tRNA synthetase alpha subunit type 1 subfamily. In terms of assembly, tetramer of two alpha and two beta subunits. Mg(2+) is required as a cofactor.

The protein resides in the cytoplasm. The catalysed reaction is tRNA(Phe) + L-phenylalanine + ATP = L-phenylalanyl-tRNA(Phe) + AMP + diphosphate + H(+). This Shewanella oneidensis (strain ATCC 700550 / JCM 31522 / CIP 106686 / LMG 19005 / NCIMB 14063 / MR-1) protein is Phenylalanine--tRNA ligase alpha subunit.